Here is a 162-residue protein sequence, read N- to C-terminus: uncharacterized protein (162 aa).

It belongs to the M.jannaschii MJ0150/MJ0739/MJ0745/MJ1460/MJ1642 family.

This is an uncharacterized protein from Methanocaldococcus jannaschii (strain ATCC 43067 / DSM 2661 / JAL-1 / JCM 10045 / NBRC 100440) (Methanococcus jannaschii).